The sequence spans 90 residues: Acylphosphatase (90 aa).

Residues 3–89 (ALKIRVEGIV…EGYEDFTIKY (87 aa)) form the Acylphosphatase-like domain. Residues Arg18 and Asn36 contribute to the active site.

It belongs to the acylphosphatase family.

The catalysed reaction is an acyl phosphate + H2O = a carboxylate + phosphate + H(+). In Thermotoga maritima (strain ATCC 43589 / DSM 3109 / JCM 10099 / NBRC 100826 / MSB8), this protein is Acylphosphatase (acyP).